Reading from the N-terminus, the 201-residue chain is Akirin-2 (201 aa).

A phosphoserine mark is found at Ser-18 and Ser-21. Positions 22 to 27 match the Nuclear localization signal motif; the sequence is PKRRRC. Ser-55 carries the phosphoserine modification. The SYVS motif motif lies at 198–201; that stretch reads SYVS.

Belongs to the akirin family. As to quaternary structure, homodimer. Interacts with IPO9; the interaction is direct. Associates with 20S and 26S proteasomes. Interacts with SMARCD1; promoting SWI/SNF complex recruitment. Interacts with NFKBIZ. Interacts with YWHAB. In terms of processing, polyubiquitinated. Polyubiquitination is dependent of UBR5 that extends pre-ubiquitinated AKIRIN2. In terms of tissue distribution, highly expressed in testis, cerebrum and cerebellum, and barely detectable in liver, heart, spleen and muscle. Also highly expressed in various tumor cells from hepatoma, glioblastoma and pheochromocytoma.

Its subcellular location is the nucleus. The protein localises to the cytoplasm. It localises to the membrane. Molecular adapter that acts as a bridge between a variety of multiprotein complexes, and which is involved in embryonic development, immunity, myogenesis and brain development. Plays a key role in nuclear protein degradation by promoting import of proteasomes into the nucleus: directly binds to fully assembled 20S proteasomes at one end and to nuclear import receptor IPO9 at the other end, bridging them together and mediating the import of pre-assembled proteasome complexes through the nuclear pore. Involved in innate immunity by regulating the production of interleukin-6 (IL6) downstream of Toll-like receptor (TLR): acts by bridging the NF-kappa-B inhibitor NFKBIZ and the SWI/SNF complex, leading to promote induction of IL6. Also involved in adaptive immunity by promoting B-cell activation. Involved in brain development: required for the survival and proliferation of cerebral cortical progenitor cells. Involved in myogenesis: required for skeletal muscle formation and skeletal development, possibly by regulating expression of muscle differentiation factors. Also plays a role in facilitating interdigital tissue regression during limb development. This is Akirin-2 from Rattus norvegicus (Rat).